We begin with the raw amino-acid sequence, 193 residues long: Superoxide dismutase [Fe] (193 aa).

Residues H27, H75, D159, and H163 each coordinate Fe cation.

It belongs to the iron/manganese superoxide dismutase family. As to quaternary structure, homodimer. Fe cation is required as a cofactor.

It carries out the reaction 2 superoxide + 2 H(+) = H2O2 + O2. In terms of biological role, destroys superoxide anion radicals which are normally produced within the cells and which are toxic to biological systems. The protein is Superoxide dismutase [Fe] (sodB) of Bacteroides fragilis (strain YCH46).